A 177-amino-acid polypeptide reads, in one-letter code: Large ribosomal subunit protein uL5 (177 aa).

This sequence belongs to the universal ribosomal protein uL5 family. As to quaternary structure, part of the 50S ribosomal subunit; part of the 5S rRNA/L5/L18/L25 subcomplex. Contacts the 5S rRNA and the P site tRNA. Forms a bridge to the 30S subunit in the 70S ribosome.

In terms of biological role, this is one of the proteins that bind and probably mediate the attachment of the 5S RNA into the large ribosomal subunit, where it forms part of the central protuberance. In the 70S ribosome it contacts protein S13 of the 30S subunit (bridge B1b), connecting the 2 subunits; this bridge is implicated in subunit movement. Contacts the P site tRNA; the 5S rRNA and some of its associated proteins might help stabilize positioning of ribosome-bound tRNAs. The chain is Large ribosomal subunit protein uL5 from Anaplasma phagocytophilum (strain HZ).